The primary structure comprises 199 residues: Small heat shock protein hspG4 (199 aa).

The 170-residue stretch at 30–199 (NKRVDIIPSM…SSNTIKININ (170 aa)) folds into the sHSP domain. Residues 83–105 (KNQQQQQQQQQLENSNNKENDEP) are disordered.

This sequence belongs to the small heat shock protein (HSP20) family.

The polypeptide is Small heat shock protein hspG4 (hspG4) (Dictyostelium discoideum (Social amoeba)).